The following is a 142-amino-acid chain: MVLSAADKTNVKGVFSKIGGHAEEYGAETLERMFIAYPQTKTYFPHFDLSHGSAQIKAHGKKVAAALVEAVNHIDDIAGALSKLSDLHAQKLRVDPVNFKFLGHCFLVVVAIHHPAALTPEVHASLDKFLCAVGAVLTAKYR.

The Globin domain maps to 2–142 (VLSAADKTNV…VGAVLTAKYR (141 aa)). O2 is bound at residue His59. His88 contributes to the heme b binding site.

This sequence belongs to the globin family. In terms of assembly, heterotetramer of two alpha chains and two beta chains. Red blood cells.

Its function is as follows. Involved in oxygen transport from the lung to the various peripheral tissues. The polypeptide is Hemoglobin subunit alpha-A (HBAA) (Mareca penelope (Eurasian wigeon)).